Here is an 868-residue protein sequence, read N- to C-terminus: LPS-assembly protein LptD (868 aa).

A signal peptide spans 1–24 (MLKGIHKYLLMCFGTVLFTVQANA).

It belongs to the LptD family. In terms of assembly, component of the lipopolysaccharide transport and assembly complex. Interacts with LptE and LptA.

It localises to the cell outer membrane. In terms of biological role, together with LptE, is involved in the assembly of lipopolysaccharide (LPS) at the surface of the outer membrane. This is LPS-assembly protein LptD from Francisella tularensis subsp. tularensis (strain FSC 198).